The sequence spans 516 residues: Potassium voltage-gated channel subfamily A member 10 (516 aa).

A helical membrane pass occupies residues 223–244 (VALVSVLVIVISIIIFCMETLP). An N-linked (GlcNAc...) asparagine glycan is attached at Asn261. The helical transmembrane segment at 276–296 (FFVIETACIIWFSFELFVRFI) threads the bilayer. A helical transmembrane segment spans residues 308–328 (IMNIIDIVSIIPYFVTLTTEL). A glycan (N-linked (GlcNAc...) asparagine) is linked at Asn339. Residues 344–363 (ILRIIRLVRVFRIFKLSRHS) form a helical; Voltage-sensor membrane-spanning segment. Residues 380 to 400 (LGLLIFFLFIGVILFSSAVYF) form a helical membrane-spanning segment. The Selectivity filter signature appears at 426–431 (TVGYGD). A helical transmembrane segment spans residues 441 to 461 (IVGTLCAIAGVLTIALPVPVI). The N-linked (GlcNAc...) asparagine glycan is linked to Asn503.

It belongs to the potassium channel family. A (Shaker) (TC 1.A.1.2) subfamily. Kv1.8/KCNA10 sub-subfamily. Homotetramer. As to expression, detected in brain, cochlear sensory epithelium, cochlear ganglion, tegumentum vasculosum. Detected at low levels in cochlear lagena.

It localises to the membrane. The catalysed reaction is K(+)(in) = K(+)(out). The channel activity is up-regulated by cAMP. Its function is as follows. Voltage-gated potassium ion channel that mediates K(+) permeability of excitable membranes. When opened in response to the voltage difference across the membrane, KCNA10 channel selectively allows the flow of potassium ions across the membrane down their electrochemical gradient. In Gallus gallus (Chicken), this protein is Potassium voltage-gated channel subfamily A member 10 (KCNA10).